Consider the following 1699-residue polypeptide: Genome polyprotein (1699 aa).

The segment covering 1–19 (MKMASNDASAAAVVNSNND) has biased composition (low complexity). The interval 1–78 (MKMASNDASA…PPPPPNGEDE (78 aa)) is disordered. The segment at 1–116 (MKMASNDASA…AFSVPPLNQR (116 aa)) is interaction with host MAP1LC3A/LC3. The segment covering 46-74 (QPPPRETPQRPPRPPTPELVKKIPPPPPN) has biased composition (pro residues). Residues 117–330 (ENRDAKEPLT…APLLGDYELQ (214 aa)) form an interaction with NTPase region. The tract at residues 233–330 (RPYQDWNRKP…APLLGDYELQ (98 aa)) is interaction with NS4. Host ER membrane association regions lie at residues 250 to 281 (KLKKVANVFLCALSSLFTRPIKDIIGKLRPLN) and 292 to 330 (TFAGIVESLILLAELFGVFWTPPDVSAMIAPLLGDYELQ). Residues 331–509 (GPEDLAVELV…GKTHLARELA (179 aa)) are interaction with NS1-2, NS4 and homooligomerization. The SF3 helicase domain maps to 465 to 632 (LARIAAARSL…EKAKRDFPGQ (168 aa)). 495-502 (GKPGIGKT) is an ATP binding site. Positions 586 to 691 (AIIITTNLAN…ASGLLHERLD (106 aa)) are important for mitochondrion targeting. The segment at 764-770 (YTLESDG) is functions as endoplasmic reticulum export signal. The host membrane association stretch occupies residues 801-850 (RIRYYVKCVQEALYSIIQIAGAAFVTTRIVKRMNIQDLWSKPQVEDTEDT). Residues 843-894 (QVEDTEDTANKDGCPKPKDDEEFVVSSDDIKTEGKKGKNKTGRGKKHTAFSS) are disordered. Residues 850-861 (TANKDGCPKPKD) show a composition bias toward basic and acidic residues. The segment covering 879-890 (GKNKTGRGKKHT) has biased composition (basic residues). Residues 899-904 (DEEYDE) form an acidic region. Residue tyrosine 902 is modified to O-(5'-phospho-RNA)-tyrosine. Residues 992–1008 (WADDDRSVDYNEKLDFE) are interaction with host EIF4G. The Peptidase C37 domain occupies 1009–1189 (APPSIWSRIV…QGSEGEATLE (181 aa)). Active-site for 3CLpro activity residues include histidine 1038, glutamate 1062, and cysteine 1147. Positions 1425 to 1546 (KYHYDADYSR…STDINLNPEK (122 aa)) constitute a RdRp catalytic domain. Aspartate 1429, aspartate 1431, aspartate 1533, and glutamate 1534 together coordinate Mg(2+).

In terms of assembly, homodimer. Homooligomer. Interacts with NTPase; this interaction increases the proapoptotic activity of the NTPase and is crucial for the formation of the viral replication complex. Interacts with NS4; this interaction is crucial for the formation of the viral replication complex. Interacts (via N-terminus) with host VAPA. Interacts with host MAP1LC3A/LC3; this interaction does not seem to be linked to host autophagy, but rather plays a role in the formation of viral factories. Homooligomer. Interacts with NS1-2; this interaction increases the proapoptotic activity of the NTPase and is crucial for the formation of the viral replication complex. Interacts with NS4; this interaction increases the proapoptotic activity of the NTPase. As to quaternary structure, homodimer. Monomer; in solution. In terms of assembly, interacts with NTPase; this interaction increases the proapoptotic activity of the NTPase. Interacts with NS1-2; this interaction is crucial for the formation of the viral replication complex. Monomer. Interacts with the RNA-directed RNA polymerase; this interaction induces the multimerization of the RdRp and enhances its activity. Interacts with host IEF4G1; this interaction plays a role in translation of viral proteins. As to quaternary structure, homohexamer; also forms fibrous hexameric oligomer. Interacts with the viral genome-linked protein; this interaction induces the multimerization of the RdRp and enhances its activity. It depends on Mg(2+) as a cofactor. The cofactor is Mn(2+). Post-translationally, specific enzymatic cleavages in vivo yield mature proteins. 3CLpro is first autocatalytically cleaved, then processes the whole polyprotein. NS1/2-3 and NS3-4 sites are cleaved rapidly and NS4-5, NS5-6, and NS6-7 sites are processed subsequently and less efficiently. VPg is uridylylated by the polymerase and is covalently attached to the 5'-end of the polyadenylated genomic and subgenomic RNAs. This uridylylated form acts as a nucleotide-peptide primer for the polymerase. In terms of processing, cleaved by host CASP3/caspase 3 at 18-22 h.p.i. The cleavage allows NS1 secretion, which is essential for intestinal infection and resistance to IFN-lambda.

The protein localises to the host endoplasmic reticulum membrane. It is found in the secreted. Its subcellular location is the host mitochondrion. The protein resides in the host Golgi apparatus membrane. It localises to the host cytoplasm. The protein localises to the host perinuclear region. It catalyses the reaction a ribonucleoside 5'-triphosphate + H2O = a ribonucleoside 5'-diphosphate + phosphate + H(+). The enzyme catalyses Endopeptidase with a preference for cleavage when the P1 position is occupied by Glu-|-Xaa and the P1' position is occupied by Gly-|-Yaa.. The catalysed reaction is RNA(n) + a ribonucleoside 5'-triphosphate = RNA(n+1) + diphosphate. Its function is as follows. Induces the proliferation of the host smooth ER membranes forming long tubular structures. These remodeled membranes probably form the viral factories that contain the replication complex. May play a role in viral replication by interacting with host VAPA, a vesicle-associated membrane protein that plays a role in SNARE-mediated vesicle fusion. This interaction may target replication complex to intracellular membranes. In terms of biological role, displays NTPase activity, but no helicase activity. Displays RNA chaperone-like activity and destabilizes dsRNA. Induces the formation of convoluted membranes derived from the host ER. These remodeled membranes probably form the viral factories that contain the replication complex. Initiates host cell death by targeting the mitochondrial outer membrane, leading to the permeabilization of mitochondria, programmed host cell death and viral egress. Externalization of host cardiolipin seems to be involved in the process. Probably plays a role in preventing the assembly of host stress granules. Probable key protein responsible for the formation of membrane alterations by the virus. Induces the formation of convoluted membranes derived from the host ER. These remodeled membranes probably form the viral factories that contain the replication complex. May play a role in targeting replication complex to intracellular membranes. Functionally, viral genome-linked protein is covalently linked to the 5'-end of the positive-strand, negative-strand genomic RNAs and subgenomic RNA. Acts as a genome-linked replication primer. May recruit ribosome to viral RNA thereby promoting viral proteins translation. Interacts with host translation initiation complex to allow the translation of viral proteins. Induces the formation of aggregates of RNA-directed RNA polymerase in the presence of RNA. Through its interaction with the viral RNA-directed RNA polymerase, plays a crucial role in enhancing the polymerase activity. Its function is as follows. Processes the polyprotein. 3CLpro-RdRp is first released by autocleavage, then all other proteins are cleaved. May cleave polyadenylate-binding protein thereby inhibiting cellular translation. In terms of biological role, replicates genomic and antigenomic RNA by recognizing replications specific signals. Also transcribes a subgenomic mRNA by initiating RNA synthesis internally on antigenomic RNA. This sgRNA codes for structural proteins. Catalyzes the covalent attachment VPg with viral RNAs. The protein is Genome polyprotein of Lordsdale virus (strain GII/Human/United Kingdom/Lordsdale/1993) (Human enteric calicivirus).